A 211-amino-acid chain; its full sequence is Protein FAM167A (211 aa).

2 disordered regions span residues 1–30 and 56–108; these read MSVPQIQVEEVAGGEEGPAGTTPPPDDHLR and EEQT…GKLE. The stretch at 120 to 153 forms a coiled coil; sequence LRKELMEMRLQDQQLARQLMRLRSDIHKLKIEQT.

It belongs to the FAM167 (SEC) family.

In Bos taurus (Bovine), this protein is Protein FAM167A (FAM167A).